The sequence spans 71 residues: Large ribosomal subunit protein uL30 (71 aa).

It belongs to the universal ribosomal protein uL30 family. Part of the 50S ribosomal subunit.

The protein is Large ribosomal subunit protein uL30 of Borreliella burgdorferi (strain ATCC 35210 / DSM 4680 / CIP 102532 / B31) (Borrelia burgdorferi).